The chain runs to 112 residues: Ribonuclease P protein component (112 aa).

It belongs to the RnpA family. In terms of assembly, consists of a catalytic RNA component (M1 or rnpB) and a protein subunit.

The enzyme catalyses Endonucleolytic cleavage of RNA, removing 5'-extranucleotides from tRNA precursor.. Its function is as follows. RNaseP catalyzes the removal of the 5'-leader sequence from pre-tRNA to produce the mature 5'-terminus. It can also cleave other RNA substrates such as 4.5S RNA. The protein component plays an auxiliary but essential role in vivo by binding to the 5'-leader sequence and broadening the substrate specificity of the ribozyme. The sequence is that of Ribonuclease P protein component from Clostridium kluyveri (strain ATCC 8527 / DSM 555 / NBRC 12016 / NCIMB 10680 / K1).